We begin with the raw amino-acid sequence, 167 residues long: E1B protein, small T-antigen (167 aa).

Residues G143–L167 are disordered.

The protein belongs to the adenoviridae E1B 19 kDa protein family.

The protein localises to the host cell membrane. Its subcellular location is the host nucleus envelope. It localises to the host nucleus lamina. Its function is as follows. Putative adenovirus Bcl-2 homolog that inhibits apoptosis induced by TNF or FAS pathways, as well as p53-mediated apoptosis. Without E1B 19K function, virus production is compromised because of premature death of host cell. Interacts with Bax protein in cell lysates. This Human adenovirus F serotype 40 (HAdV-40) protein is E1B protein, small T-antigen.